The sequence spans 241 residues: tRNA pseudouridine synthase B (241 aa).

Catalysis depends on Asp45, which acts as the Nucleophile.

Belongs to the pseudouridine synthase TruB family. Type 1 subfamily.

It catalyses the reaction uridine(55) in tRNA = pseudouridine(55) in tRNA. Its function is as follows. Responsible for synthesis of pseudouridine from uracil-55 in the psi GC loop of transfer RNAs. This is tRNA pseudouridine synthase B from Chlamydia trachomatis serovar L2 (strain ATCC VR-902B / DSM 19102 / 434/Bu).